The chain runs to 192 residues: uncharacterized protein (192 aa).

One can recognise a Nudix hydrolase domain in the interval 29–160 (QRQAAVLIPV…PLDVYRRGNS (132 aa)). The Nudix box motif lies at 67-89 (GAVDSTDASLIAAALREAQEEVA). Mg(2+) contacts are provided by E83 and E87.

It belongs to the Nudix hydrolase family. PCD1 subfamily. Mn(2+) serves as cofactor. It depends on Mg(2+) as a cofactor.

Its function is as follows. Probably mediates the hydrolysis of some nucleoside diphosphate derivatives. This is an uncharacterized protein from Salmonella newport (strain SL254).